Reading from the N-terminus, the 369-residue chain is Dual specificity protein phosphatase 1-B (369 aa).

Residues 21-138 (RAHKCLILDC…FSSQCPEFCN (118 aa)) enclose the Rhodanese domain. Threonine 168 is modified (phosphothreonine; by MAPK1). The Tyrosine-protein phosphatase domain maps to 175 to 316 (GPVEILPFLY…LLQFESQVLA (142 aa)). The active-site Phosphocysteine intermediate is cysteine 260.

It belongs to the protein-tyrosine phosphatase family. Non-receptor class dual specificity subfamily. Post-translationally, phosphorylated by MAPK1/ERK2 at Thr-168 and at one or more serine residues in a progesterone-dependent manner. Phosphorylation reduces its rate of degradation but does not seem to affect phosphatase activity.

Its subcellular location is the nucleus. The catalysed reaction is O-phospho-L-seryl-[protein] + H2O = L-seryl-[protein] + phosphate. It catalyses the reaction O-phospho-L-threonyl-[protein] + H2O = L-threonyl-[protein] + phosphate. The enzyme catalyses O-phospho-L-tyrosyl-[protein] + H2O = L-tyrosyl-[protein] + phosphate. Functionally, dual specificity phosphatase that dephosphorylates MAP kinase MAPK1/ERK2 on both 'Thr-188' and 'Tyr-190', regulating its activity during the meiotic cell cycle. The polypeptide is Dual specificity protein phosphatase 1-B (Xenopus laevis (African clawed frog)).